Reading from the N-terminus, the 186-residue chain is Prorelaxin 1 (186 aa).

Positions 1 to 22 are cleaved as a signal peptide; sequence MSSRLLLQLLGFWLFLSQPCRA. 3 cysteine pairs are disulfide-bonded: Cys-36/Cys-173, Cys-48/Cys-186, and Cys-172/Cys-177. Positions 58–158 are cleaved as a propeptide — connecting peptide; sequence SQEEPAPLAR…LKYLGSDAQS (101 aa). Gln-163 is modified (pyrrolidone carboxylic acid).

It belongs to the insulin family. In terms of assembly, heterodimer of a B chain and an A chain linked by two disulfide bonds.

The protein resides in the secreted. Functionally, relaxin is an ovarian hormone that acts with estrogen to produce dilatation of the birth canal in many mammals. The sequence is that of Prorelaxin 1 (Rln1) from Rattus norvegicus (Rat).